A 100-amino-acid chain; its full sequence is Urease subunit gamma (100 aa).

This sequence belongs to the urease gamma subunit family. In terms of assembly, heterotrimer of UreA (gamma), UreB (beta) and UreC (alpha) subunits. Three heterotrimers associate to form the active enzyme.

The protein resides in the cytoplasm. It carries out the reaction urea + 2 H2O + H(+) = hydrogencarbonate + 2 NH4(+). It functions in the pathway nitrogen metabolism; urea degradation; CO(2) and NH(3) from urea (urease route): step 1/1. The chain is Urease subunit gamma from Ralstonia nicotianae (strain ATCC BAA-1114 / GMI1000) (Ralstonia solanacearum).